A 130-amino-acid polypeptide reads, in one-letter code: Small ribosomal subunit protein uS8B (130 aa).

This sequence belongs to the universal ribosomal protein uS8 family. In terms of assembly, component of the small ribosomal subunit (SSU). Mature yeast ribosomes consist of a small (40S) and a large (60S) subunit. The 40S small subunit contains 1 molecule of ribosomal RNA (18S rRNA) and 33 different proteins (encoded by 57 genes). The large 60S subunit contains 3 rRNA molecules (25S, 5.8S and 5S rRNA) and 46 different proteins (encoded by 81 genes).

The protein resides in the cytoplasm. In terms of biological role, component of the ribosome, a large ribonucleoprotein complex responsible for the synthesis of proteins in the cell. The small ribosomal subunit (SSU) binds messenger RNAs (mRNAs) and translates the encoded message by selecting cognate aminoacyl-transfer RNA (tRNA) molecules. The large subunit (LSU) contains the ribosomal catalytic site termed the peptidyl transferase center (PTC), which catalyzes the formation of peptide bonds, thereby polymerizing the amino acids delivered by tRNAs into a polypeptide chain. The nascent polypeptides leave the ribosome through a tunnel in the LSU and interact with protein factors that function in enzymatic processing, targeting, and the membrane insertion of nascent chains at the exit of the ribosomal tunnel. The protein is Small ribosomal subunit protein uS8B of Saccharomyces cerevisiae (strain ATCC 204508 / S288c) (Baker's yeast).